Here is a 437-residue protein sequence, read N- to C-terminus: Putative ABC transporter ATP-binding protein CTC_00753 (437 aa).

ABC transporter domains lie at 1–143 (MERE…LPTI) and 179–416 (LKFK…QISK). 219 to 226 (GENGAGKS) provides a ligand contact to ATP.

It belongs to the ABC transporter superfamily.

It localises to the cell membrane. In terms of biological role, probably part of an ABC transporter complex. Responsible for energy coupling to the transport system. This is Putative ABC transporter ATP-binding protein CTC_00753 from Clostridium tetani (strain Massachusetts / E88).